A 354-amino-acid chain; its full sequence is Elongation factor Ts, mitochondrial (354 aa).

Residues 1-47 (MMRSTLSLLQKCRLPNNNGSLLSFKNNQVVNQTALFSMKSNQQYRFY) constitute a mitochondrion transit peptide.

The protein belongs to the EF-Ts family.

It is found in the mitochondrion. In terms of biological role, associates with the EF-Tu.GDP complex and induces the exchange of GDP to GTP. It remains bound to the aminoacyl-tRNA.EF-Tu.GTP complex up to the GTP hydrolysis stage on the ribosome. The polypeptide is Elongation factor Ts, mitochondrial (tsfm) (Heterostelium pallidum (strain ATCC 26659 / Pp 5 / PN500) (Cellular slime mold)).